Consider the following 457-residue polypeptide: Siroheme synthase (457 aa).

The interval 1–204 (MDHLPIFCQL…NDQKAITETT (204 aa)) is precorrin-2 dehydrogenase /sirohydrochlorin ferrochelatase. NAD(+) is bound by residues 22 to 23 (DV) and 43 to 44 (LA). A Phosphoserine modification is found at serine 128. The tract at residues 216-457 (GEVVLVGAGP…RDKLNWFSNH (242 aa)) is uroporphyrinogen-III C-methyltransferase. S-adenosyl-L-methionine is bound at residue proline 225. Aspartate 248 (proton acceptor) is an active-site residue. The active-site Proton donor is lysine 270. S-adenosyl-L-methionine is bound by residues 301–303 (GGD), isoleucine 306, 331–332 (TA), methionine 382, and glycine 411.

It in the N-terminal section; belongs to the precorrin-2 dehydrogenase / sirohydrochlorin ferrochelatase family. This sequence in the C-terminal section; belongs to the precorrin methyltransferase family.

The enzyme catalyses uroporphyrinogen III + 2 S-adenosyl-L-methionine = precorrin-2 + 2 S-adenosyl-L-homocysteine + H(+). The catalysed reaction is precorrin-2 + NAD(+) = sirohydrochlorin + NADH + 2 H(+). It carries out the reaction siroheme + 2 H(+) = sirohydrochlorin + Fe(2+). It participates in cofactor biosynthesis; adenosylcobalamin biosynthesis; precorrin-2 from uroporphyrinogen III: step 1/1. The protein operates within cofactor biosynthesis; adenosylcobalamin biosynthesis; sirohydrochlorin from precorrin-2: step 1/1. It functions in the pathway porphyrin-containing compound metabolism; siroheme biosynthesis; precorrin-2 from uroporphyrinogen III: step 1/1. Its pathway is porphyrin-containing compound metabolism; siroheme biosynthesis; siroheme from sirohydrochlorin: step 1/1. It participates in porphyrin-containing compound metabolism; siroheme biosynthesis; sirohydrochlorin from precorrin-2: step 1/1. In terms of biological role, multifunctional enzyme that catalyzes the SAM-dependent methylations of uroporphyrinogen III at position C-2 and C-7 to form precorrin-2 via precorrin-1. Then it catalyzes the NAD-dependent ring dehydrogenation of precorrin-2 to yield sirohydrochlorin. Finally, it catalyzes the ferrochelation of sirohydrochlorin to yield siroheme. The sequence is that of Siroheme synthase from Escherichia coli O17:K52:H18 (strain UMN026 / ExPEC).